The following is a 1057-amino-acid chain: Carbamoyl phosphate synthase large chain (1057 aa).

A carboxyphosphate synthetic domain region spans residues 1–401 (MPKRDDIQTI…SLLKAIRSLE (401 aa)). 12 residues coordinate ATP: arginine 129, arginine 169, glycine 175, glycine 176, lysine 208, isoleucine 210, glutamate 215, glycine 241, isoleucine 242, histidine 243, glutamine 284, and glutamate 298. The region spanning 133-327 (RTLMNDLNVP…IAKLAAKIAV (195 aa)) is the ATP-grasp 1 domain. Mg(2+)-binding residues include glutamine 284, glutamate 298, and asparagine 300. Glutamine 284, glutamate 298, and asparagine 300 together coordinate Mn(2+). Residues 402 to 546 (YGVHHLGLPN…YGTYEDENES (145 aa)) form an oligomerization domain region. The tract at residues 547–929 (IVTDKEKILV…ALYKGLTGSG (383 aa)) is carbamoyl phosphate synthetic domain. Positions 671–861 (EALLREISVP…MAQLAMRAIM (191 aa)) constitute an ATP-grasp 2 domain. ATP-binding residues include arginine 707, arginine 746, leucine 748, glutamate 752, glycine 777, valine 778, histidine 779, serine 780, glutamine 820, and glutamate 832. Mg(2+) contacts are provided by glutamine 820, glutamate 832, and asparagine 834. Mn(2+)-binding residues include glutamine 820, glutamate 832, and asparagine 834. Positions 930–1057 (FEVKDHGTVL…ESMTFTMRNV (128 aa)) constitute an MGS-like domain. The allosteric domain stretch occupies residues 930 to 1057 (FEVKDHGTVL…ESMTFTMRNV (128 aa)).

Belongs to the CarB family. In terms of assembly, composed of two chains; the small (or glutamine) chain promotes the hydrolysis of glutamine to ammonia, which is used by the large (or ammonia) chain to synthesize carbamoyl phosphate. Tetramer of heterodimers (alpha,beta)4. It depends on Mg(2+) as a cofactor. Mn(2+) serves as cofactor.

The catalysed reaction is hydrogencarbonate + L-glutamine + 2 ATP + H2O = carbamoyl phosphate + L-glutamate + 2 ADP + phosphate + 2 H(+). It carries out the reaction hydrogencarbonate + NH4(+) + 2 ATP = carbamoyl phosphate + 2 ADP + phosphate + 2 H(+). It functions in the pathway amino-acid biosynthesis; L-arginine biosynthesis; carbamoyl phosphate from bicarbonate: step 1/1. It participates in pyrimidine metabolism; UMP biosynthesis via de novo pathway; (S)-dihydroorotate from bicarbonate: step 1/3. Large subunit of the glutamine-dependent carbamoyl phosphate synthetase (CPSase). CPSase catalyzes the formation of carbamoyl phosphate from the ammonia moiety of glutamine, carbonate, and phosphate donated by ATP, constituting the first step of 2 biosynthetic pathways, one leading to arginine and/or urea and the other to pyrimidine nucleotides. The large subunit (synthetase) binds the substrates ammonia (free or transferred from glutamine from the small subunit), hydrogencarbonate and ATP and carries out an ATP-coupled ligase reaction, activating hydrogencarbonate by forming carboxy phosphate which reacts with ammonia to form carbamoyl phosphate. This is Carbamoyl phosphate synthase large chain from Staphylococcus epidermidis (strain ATCC 35984 / DSM 28319 / BCRC 17069 / CCUG 31568 / BM 3577 / RP62A).